The primary structure comprises 93 residues: Alpha-elapitoxin-Oh2a (93 aa).

Residues 1–21 (MKTLLLTLVVVTIVCLDLGYT) form the signal peptide. 5 disulfides stabilise this stretch: cysteine 24–cysteine 43, cysteine 36–cysteine 64, cysteine 49–cysteine 53, cysteine 68–cysteine 79, and cysteine 80–cysteine 85.

The protein belongs to the three-finger toxin family. Long-chain subfamily. Type II alpha-neurotoxin sub-subfamily. As to expression, expressed by the venom gland.

The protein localises to the secreted. Binds with high affinity to muscular (alpha-1/CHRNA1) and neuronal (alpha-7/CHRNA7) nicotinic acetylcholine receptor (nAChR) and inhibits acetylcholine from binding to the receptor, thereby impairing neuromuscular and neuronal transmission. The sequence is that of Alpha-elapitoxin-Oh2a from Ophiophagus hannah (King cobra).